We begin with the raw amino-acid sequence, 232 residues long: Aspartate racemase (232 aa).

Aspartate 49 to threonine 51 is a binding site for substrate. The active-site Proton donor/acceptor is the cysteine 84. Substrate is bound by residues asparagine 85–alanine 87 and lysine 166. The Proton donor/acceptor role is filled by cysteine 195.

This sequence belongs to the aspartate/glutamate racemases family.

The catalysed reaction is L-aspartate = D-aspartate. The protein is Aspartate racemase of Thermococcus sp. (strain KS-8).